We begin with the raw amino-acid sequence, 581 residues long: NADH-quinone oxidoreductase subunit C/D (581 aa).

Residues 1–172 (MSAFELVTEL…PLFNMTASLF (172 aa)) are NADH dehydrogenase I subunit C. Residues 196-581 (ELMILNYGPH…IDYVMSDVDR (386 aa)) form an NADH dehydrogenase I subunit D region.

The protein in the N-terminal section; belongs to the complex I 30 kDa subunit family. In the C-terminal section; belongs to the complex I 49 kDa subunit family. In terms of assembly, NDH-1 is composed of 13 different subunits. Subunits NuoB, CD, E, F, and G constitute the peripheral sector of the complex.

The protein resides in the cell inner membrane. It carries out the reaction a quinone + NADH + 5 H(+)(in) = a quinol + NAD(+) + 4 H(+)(out). Functionally, NDH-1 shuttles electrons from NADH, via FMN and iron-sulfur (Fe-S) centers, to quinones in the respiratory chain. The immediate electron acceptor for the enzyme in this species is believed to be ubiquinone. Couples the redox reaction to proton translocation (for every two electrons transferred, four hydrogen ions are translocated across the cytoplasmic membrane), and thus conserves the redox energy in a proton gradient. The protein is NADH-quinone oxidoreductase subunit C/D of Rhodopseudomonas palustris (strain ATCC BAA-98 / CGA009).